The chain runs to 2049 residues: MAARNVSAAHEMHDEKRIAVVGMAVQYAGCKTKDEFWEVLMNGKVESGKISDKRLGSNHRAEHYKAQRSKYADTFCNETYGCLDENEVDNEHELLLSLAKQALAETSVKDSTRCGIVSGCLSFPMDNLQGELLNVYQSHVEKKLGARVFKDASHWSEREQSQKPEAGDRRVFMDPASFVAEELNLGALHYSVDAACATALYVLRLAQDHLVSGAADVMLCGATCLPEPFFILSGFSTFQAMPVGTGQGVSMPLHKDSQGLTPGEGGSIMVLKRLEDAVRDGDHIYGTLLGANLSNAGTGLPLKPLLPAEKACLMDTYKRVNVHPHKVQYVECHATGTPQGDRVEIDAVKACFEGKVPRFGTTKGNFGHTLVAAGFAGMCKVLLAMKHGVIPPTPGIDASTQIDPLVVAGAAIPWPETDGEPKRAGLSAFGFGGTNAHAVFEEHDPSKVACAGRDSVTALSARCGGENNMRIAITGMDATFGALKGLDAFERAIYTGTHGAIPLPEKRWRFLGKDRDFLDLCGVKSTPHGCYIEDVEVDFQRLRTPMTPEDMLLPQQLLAVTTIDRAILDSGMEKGGNVAVFVGLGTDLELYRHRARVALKERLRPEAAARLDPMMQYINDCGTSTSYTSYIGNLVATRVSSQWGFTGPSFTITEGNNSVYRCAELGKYLLETGEVDGVVIAGVDLCGSAENLYVKSRRFKVASGEAPRASFDAAADGYFVGEGCGALVLKRETSCTEKDRIYACVDAIVPGNMPGACLREALDQARVQPGAVEMLELSADSARHLRDASVLPKELTAEEELATLQSVLADASKLPRHVAAGSVKATVGDTGYASGAASLIKAALCVHNRYLPSNGDAFEGPAPEAPWGEALFACQSSRAWLKNPGERRYAAVSGVSETRSCYSVLLSDAEGHHERENRQSLDEEAPKLIVLRADSHEEILARLDKIRERFLQPTGAAPREADLKDQARRLFLELLGETLAQEADAKAGRGPQKRLALSIVSTPAKLQREVELAAKGIPRCLKMRRDWTSPAGSRYAPEPLASDRVAFMYGEGRSPYYGILQDMHRIWPALHEVINEKTTSLWSEGDRWVMPRASSKAELEEQREAFDRNQIEMFRLGILSSMSFTTLARDVLNITPKAAFGLSLGEISMLFSYSDKNGKNSDRLTRDLRASRVWNEALAIEFNALREAWGISKDTPKDEFWQGYIVHGTKQAIEDAIAPDSKYVRLTIINDGNSALISGKPDACKAAIARLGSKVPALPVSQGMCGHCPEVAPYAKEIAEIHQILDIPDTDVNLFSSVSLKRLVPRSTGAKDECAPENVGEYLSELYTRQADFPAIVETVYKQNYDIFVEAGPNNHRSSAVRATLGPQRSHVTGAMDKQNEDAWTTIVKLMATLQAHRVPGATIAPLYHTKLVAEAHACYESFAKGEKPKKNKFVRKIQVNGRFDPKREPISAADLEKLPPADPSIESAIAGRVMTPVAPKFYSRLNIDQQDEARDPILNKDNQPAVAPAATAAPTPKPKPAASSGKPVPSADALRDALLSTDRMLSLGTASASGDLVETAAEDASVIIPPCAVSDLGSRAFMKTYGVNAPMYTGAMAKGIASADLVIAAGKQGMLGSFGAGGLPMHLVREAVDKIQAALPHGPYAVNLIHSPFDSNLEKGNVDLFLEKGVTIVEASAFMTLTPQVVRYRAAGLSRNADGSVRIRNRLIGKVSRTELAGMFMRPAPENLLEKLIASGEITQEQAELARRVPVADDIAVEADSGGHTDNRPIHVILPLIINLRDRVHRECGFPPELRVRVGAGGGIGCPQAALAAFNMGAAFIVTGTVNQLAKQSGTCDNVRKQLSKATYSDVCMAPAADMFEEGVKLQVLKKGTMFPSRANKLYELFCKYDSFESMAPGELERVEKRIFKRPLQEVWDETKDFYINRLHNPEKIQRAEERDPKLKMSLCFRWYLGLASRWANTGASDRVMDYQVWCGPAIGSYNDFVKGTYLDPEVSGEYPCVVQINKQILRGACFLRRLETLRNAPLASSAEALVSQVDDTYVPANKL.

2 consecutive Ketosynthase family 3 (KS3) domains span residues 15–442 (EKRI…VFEE) and 468–908 (NMRI…LLSD). Active-site for beta-ketoacyl synthase 1 activity residues include cysteine 196, histidine 333, and histidine 368. Residues 467 to 984 (NNMRIAITGM…LGETLAQEAD (518 aa)) form a chain length factor (CLF) domain region. The interval 1044–1377 (RVAFMYGEGR…QRSHVTGAMD (334 aa)) is acyltransferase (AT) domain. A disordered region spans residues 1500–1531 (NKDNQPAVAPAATAAPTPKPKPAASSGKPVPS). The segment covering 1505 to 1531 (PAVAPAATAAPTPKPKPAASSGKPVPS) has biased composition (low complexity). The interval 1579–1887 (SRAFMKTYGV…SRANKLYELF (309 aa)) is enoyl reductase (ER) domain.

As to quaternary structure, component of the polyunsaturated fatty acid synthase complex composed of at least ORF-A, ORF-B and ORF-C.

It functions in the pathway lipid metabolism; fatty acid biosynthesis. Functionally, poliketide synthase-like protein; part of the polyunsaturated fatty acid synthase composed of the 3 PKS-like subunits A, B and C. While the saturated fatty acids (SFAs) in Thraustochytrium are produced by the conventional fatty acid synthase (FAS) pathway, polyunsaturated fatty acids (PUFAs) including docosahexeanoic acid (DHA) and docosapentaenoic acid (DPA) are synthesized via an anaerobical PKS pathway. PUFA synthase assimilates fatty acyl-CoA, the product of FAS, as the starter unit to synthesize DPA, and this starter unit may be butyryl-CoA, hexanoyl-CoA, or octanoyl-CoA. DPA and DHA biosynthesis seem to differ by the reduction at the N-3 position by PUFA synthase, not the extension of carbon chain. In DHA biosynthesis, PUFA synthase extends the fatty acyl chain from the methyl toward the carboxyl end, and the double bond is formed when the carbon chain is growing, instead of afterward. Therefore, PUFA synthase is unable to transform DPA to DHA, suggesting that DPA is not the precursor of DHA. Moreover, DPA molecule is partly extended by FAS KS domain, so DPA biosynthesis is less dependent on PUFA synthase KS domain than DHA. The sequence is that of Polyunsaturated fatty acid synthase subunit B from Thraustochytrium sp. (strain ATCC 26185 / S-3).